Consider the following 450-residue polypeptide: ATP-dependent protease ATPase subunit HslU (450 aa).

Residues V29, 71-76 (GVGKTE), D261, E328, and R400 each bind ATP.

Belongs to the ClpX chaperone family. HslU subfamily. A double ring-shaped homohexamer of HslV is capped on each side by a ring-shaped HslU homohexamer. The assembly of the HslU/HslV complex is dependent on binding of ATP.

The protein resides in the cytoplasm. Functionally, ATPase subunit of a proteasome-like degradation complex; this subunit has chaperone activity. The binding of ATP and its subsequent hydrolysis by HslU are essential for unfolding of protein substrates subsequently hydrolyzed by HslV. HslU recognizes the N-terminal part of its protein substrates and unfolds these before they are guided to HslV for hydrolysis. This Rickettsia rickettsii (strain Iowa) protein is ATP-dependent protease ATPase subunit HslU.